Reading from the N-terminus, the 355-residue chain is MVATVVGTRVESLASSGIEAIPKEYVRPQEELTSIGNIFEEEKKENGPQVPTIDLEDLVSEDEEKRVRCHEELKRAATEWGVMQVVNHGIPIELMERVRAAGAEFFNQSVEEKEKYANDHASGNIQGYGSKLANNASGQLEWEDYFFHLVYPEDKRDMSIWPKTPSDYIPATSAYAEHLRGLATKILSALSLGLGLEEGRLEKEVGGMEELLLQMKINYYPKCPQPELALGVEAHTDVSALTFILHNMVPGLQLFYEGKWVTAKCVPDSLVMHIGDTIEILSNGKYKSILHRGLVNKEKVRISWAVFCEPPKEKIILKPLPETVSEAEPPLYPPRTFAQHIHHKLFRKTQELGAK.

Residues Tyr145 and Lys216 each coordinate substrate. The region spanning 211 to 310 (LLLQMKINYY…RISWAVFCEP (100 aa)) is the Fe2OG dioxygenase domain. 218–220 (NYY) is a 2-oxoglutarate binding site. His235 lines the Fe cation pocket. Thr236 is a binding site for substrate. Residues Asp237 and His291 each contribute to the Fe cation site. 2-oxoglutarate is bound by residues Arg301 and 301 to 303 (RIS). Positions 309 and 344 each coordinate substrate.

The protein belongs to the iron/ascorbate-dependent oxidoreductase family. The cofactor is L-ascorbate. Fe(2+) serves as cofactor. As to expression, expressed in stems and leaves. Expressed at low levels in ovaries.

It carries out the reaction a (2R,3S,4S)-leucoanthocyanidin + 2-oxoglutarate + O2 = a 4-H-anthocyanidin with a 3-hydroxy group + succinate + CO2 + 2 H2O. It participates in pigment biosynthesis; anthocyanin biosynthesis. Functionally, involved in anthocyanin biosynthesis by catalyzing the oxidation of leucoanthocyanidins into anthocyanidins. Required for the accumulation of anthocyanin in red-fleshed kiwifruit varieties. The chain is Anthocyanin synthase from Actinidia chinensis var. chinensis (Chinese soft-hair kiwi).